A 435-amino-acid polypeptide reads, in one-letter code: ATP-dependent protease ATPase subunit HslU (435 aa).

ATP is bound by residues Ile-18, 60 to 65 (GVGKTE), Asp-248, Glu-313, and Arg-385.

It belongs to the ClpX chaperone family. HslU subfamily. As to quaternary structure, a double ring-shaped homohexamer of HslV is capped on each side by a ring-shaped HslU homohexamer. The assembly of the HslU/HslV complex is dependent on binding of ATP.

Its subcellular location is the cytoplasm. In terms of biological role, ATPase subunit of a proteasome-like degradation complex; this subunit has chaperone activity. The binding of ATP and its subsequent hydrolysis by HslU are essential for unfolding of protein substrates subsequently hydrolyzed by HslV. HslU recognizes the N-terminal part of its protein substrates and unfolds these before they are guided to HslV for hydrolysis. The chain is ATP-dependent protease ATPase subunit HslU from Rhizobium leguminosarum bv. trifolii (strain WSM2304).